Consider the following 304-residue polypeptide: D-tagatose-1-phosphate kinase (304 aa).

Asp-250 acts as the Proton acceptor in catalysis.

The protein belongs to the carbohydrate kinase PfkB family. Requires Mg(2+) as cofactor.

The catalysed reaction is alpha-D-tagatopyranose 1-phosphate + ATP = D-tagatofuranose 1,6-bisphosphate + ADP + H(+). Its pathway is carbohydrate degradation. With respect to regulation, activity is inhibited by tagatose-6-phosphate and fructose-6-phosphate. Functionally, kinase involved in a D-tagatose catabolic pathway. Catalyzes the phosphorylation of D-tagatose-1-phosphate (Tag-1P) to D-tagatose-1,6-bisphosphate. Can also use D-fructose-1-phosphate, with 40-fold lower catalytic efficiency, but not tagatose-6-phosphate or fructose-6-phosphate. The substrate, which occurs in a pyranose form in solution, may undergo a change to the furanose conformation after binding to the enzyme, in order to permit phosphorylation at C-6. This is D-tagatose-1-phosphate kinase from Bacillus licheniformis (strain ATCC 14580 / DSM 13 / JCM 2505 / CCUG 7422 / NBRC 12200 / NCIMB 9375 / NCTC 10341 / NRRL NRS-1264 / Gibson 46).